The chain runs to 2488 residues: PKS-NRPS hybrid synthetase swnK (2488 aa).

An adenylation (A) domain region spans residues 33–422 (FEQVADRFPD…GRIDGVVKIR (390 aa)). The region spanning 523-598 (QPTSELEQRI…ALAAYLAGTG (76 aa)) is the Carrier 1 domain. Residue Ser-558 is modified to O-(pantetheine 4'-phosphoryl)serine. The region spanning 616 to 1039 (HEDIAIVSMA…GTNAHVIVEE (424 aa)) is the Ketosynthase family 3 (KS3) domain. Residues Cys-785, His-920, and His-960 each act as for beta-ketoacyl synthase activity in the active site. Residues 1149-1471 (LFTGQGSQLP…SLSELHVRHV (323 aa)) are malonyl-CoA:ACP transacylase (MAT) domain. The ketoreductase (KR) domain stretch occupies residues 1723–1901 (GAVLVTGGLG…ASSVAYGTWA (179 aa)). A Carrier 2 domain is found at 2002-2077 (SIVLHMVQAT…SLSEFLLCRL (76 aa)). Position 2037 is an O-(pantetheine 4'-phosphoryl)serine (Ser-2037). The interval 2084-2103 (STSSPSDTDGATPSTPTSAA) is disordered. Residues 2136 to 2364 (VTGATGFVGT…VLPVDYLCGT (229 aa)) are thioester reductase (TE) domain.

This sequence in the N-terminal section; belongs to the NRP synthetase family.

It catalyses the reaction L-pipecolate + malonyl-CoA + 2 NADPH + 4 H(+) = (8aS)-octahydroindolizin-1-one + CO2 + 2 NADP(+) + CoA + 2 H2O. The enzyme catalyses L-pipecolate + malonyl-CoA + 3 NADPH + 5 H(+) = (1R,8aS)-octahydroindolizin-1-ol + CO2 + 3 NADP(+) + CoA + 2 H2O. The catalysed reaction is L-pipecolate + malonyl-CoA + 3 NADPH + 5 H(+) = (1S,8aS)-octahydroindolizin-1-ol + CO2 + 3 NADP(+) + CoA + 2 H2O. Its pathway is mycotoxin biosynthesis. Its function is as follows. PKS-NRPS hybrid synthetase; part of the gene cluster that mediates the biosynthesis of swainsonine (SW), a cytotoxic fungal alkaloid and a potential cancer therapy drug. Swainsonine production occurs via a multibranched pathway and is dispensable for fungal colonization of plants and infection of insect hosts. The first step of swainsonine biosynthesis is the production of the precursor pipecolic acid (PA) via conversion of L-lysine (Lys) to 1-piperideine-6-carboxylate (P6C) by the aminotransferase swnA, the latter being further reduced to PA by the reductase swnR. PA can be converted from lysine by both the SW biosynthetic cluster and the unclustered genes such as lysine cyclodeaminase. The PKS-NRPS hybrid synthetase swnK uptakes and condensates PA and malonyl-CoA with and without skipping of the ketoreductase (KR) domain in order to produce 3 intermediates, 1-oxoindolizidine, (1S)-1-hydroxyindolizin, and (1R)-1-hydroxyindolizine; with the transisomer (1S)-1-hydroxyindolizin being predominant. The terminal thioester reductase (TE) domain of swnK is involved in reduction of the thioester bond to release the intermediate aldehydes. The oxidoreductase swnN could contribute to the reduction of 1-oxoindolizidine to (1S)-1-hydroxyindolizin and (1R)-1-hydroxyindolizine, contributing to the major route of SW production. The dioxygenase swnH2 would be responsible for the oxidization of (1R)-1-hydroxyindolizine into (1R,2S)-1,2-dihydroxyindolizine and of (1S)-1-hydroxyindolizin to yield both (1R,2S)-1,2-dihydroxyindolizine and (1S,2S)-1,2-dihydroxyindolizine. The dioxygenase swnH1 then performs the conversion of the 1,2-dihydroxyindolizine epimers to SW. The sequence is that of PKS-NRPS hybrid synthetase swnK from Metarhizium robertsii (strain ARSEF 23 / ATCC MYA-3075) (Metarhizium anisopliae (strain ARSEF 23)).